The chain runs to 769 residues: CO(2)-response secreted protease (769 aa).

An N-terminal signal peptide occupies residues 1 to 27 (MKGITFFTPFLSFLYLLCILFMTETEA). Residues 35 to 108 (VYIVYMGSAS…VFPDPHFQLH (74 aa)) enclose the Inhibitor I9 domain. A Peptidase S8 domain is found at 112–613 (SWDFLKYQTS…AGELSSTASM (502 aa)). Residues Asp145 and His210 each act as charge relay system in the active site. Positions 381–465 (ADASEGSARA…SKEAAEIFSY (85 aa)) constitute a PA domain. Residue Ser546 is the Charge relay system of the active site.

The protein belongs to the peptidase S8 family. As to expression, expressed in roots, guard cells and meristemoid and pavement cells.

It localises to the secreted. Its subcellular location is the cell wall. The enzyme catalyses Release of an N-terminal tripeptide from a polypeptide.. Mediates CO(2)-controlled stomatal development by cleaving peptide EPF2 (AC Q8LC53). Not active on peptides EPF1 (AC Q8S8I4) or stomagen (AC Q9SV72). The polypeptide is CO(2)-response secreted protease (Arabidopsis thaliana (Mouse-ear cress)).